Consider the following 343-residue polypeptide: MKMPSIIQIQFVALKRLLVETKEQMCFAVKSIFQRVFAWVMSLSLFSWFYVNLQNILIKALRVGPVPEHVSFIMDGNRRYAKSRRLPVKKGHEAGGLTLLTLLYICKRLGVKCVSAYAFSIENFNRPKEEVDTLMNLFTVKLDEFAKRAKDYKDPLYGSKIRIVGDQSLLSPEMRKKIKKVEEITQDGDDFTLFICFPYTSRNDMLHTIRDSVEDHLENKSPRINIRKFTNKMYMGFHSNKCELLIRTSGHRRLSDYMLWQVHENATIEFSDTLWPNFSFFAMYLMILKWSFFSTIQKYNEKNHSLFEKIHESVPSIFKKKKTAMSLYNFPNPPISVSVTGDE.

It belongs to the UPP synthase family. In terms of assembly, forms an active dehydrodolichyl diphosphate synthase complex with NUS1. The cofactor is Mg(2+).

It is found in the lipid droplet. The enzyme catalyses n isopentenyl diphosphate + (2E,6E)-farnesyl diphosphate = a di-trans,poly-cis-polyprenyl diphosphate + n diphosphate. It participates in protein modification; protein glycosylation. Its function is as follows. With NUS1, forms the dehydrodolichyl diphosphate synthase (DDS) complex, an essential component of the dolichol monophosphate (Dol-P) biosynthetic machinery. Adds multiple copies of isopentenyl pyrophosphate (IPP) to farnesyl pyrophosphate (FPP) to produce dehydrodolichyl diphosphate (Dedol-PP), a precursor of dolichol which is utilized as a sugar carrier in protein glycosylation in the endoplasmic reticulum (ER). This chain is Dehydrodolichyl diphosphate synthase complex subunit SRT1, found in Saccharomyces cerevisiae (strain ATCC 204508 / S288c) (Baker's yeast).